The sequence spans 256 residues: Peroxisomal membrane protein PMP30B (256 aa).

Belongs to the peroxin-11 family.

It localises to the peroxisome membrane. Functionally, involved in peroxisomal proliferation. Could participate in peroxisomal elongation or fission. May be involved in parceling of peroxisomes into regular quanta. The sequence is that of Peroxisomal membrane protein PMP30B (PEX11B) from Candida boidinii (Yeast).